A 589-amino-acid polypeptide reads, in one-letter code: Phosphoenolpyruvate carboxykinase [GTP] (589 aa).

Substrate-binding positions include arginine 75 and 207–209 (YGG). Lysine 216 and histidine 236 together coordinate Mn(2+). Serine 258 serves as a coordination point for substrate. Position 259–264 (259–264 (ASGKTN)) interacts with GTP. Serine 260 is an active-site residue. Aspartate 287 contributes to the Mn(2+) binding site. 374-376 (NSR) provides a ligand contact to substrate. GTP-binding positions include arginine 376, arginine 407, and 500–503 (FAEN).

This sequence belongs to the phosphoenolpyruvate carboxykinase [GTP] family. Mn(2+) is required as a cofactor.

It localises to the cytoplasm. It catalyses the reaction oxaloacetate + GTP = phosphoenolpyruvate + GDP + CO2. It functions in the pathway carbohydrate biosynthesis; gluconeogenesis. Catalyzes the conversion of oxaloacetate (OAA) to phosphoenolpyruvate (PEP), the rate-limiting step in the metabolic pathway that produces glucose from lactate and other precursors derived from the citric acid cycle. The chain is Phosphoenolpyruvate carboxykinase [GTP] from Thermoplasma volcanium (strain ATCC 51530 / DSM 4299 / JCM 9571 / NBRC 15438 / GSS1).